A 358-amino-acid chain; its full sequence is Ganglioside-induced differentiation-associated protein 1 (358 aa).

The 82-residue stretch at 24-105 (VKLILYHWTH…YLEQTFLDEK (82 aa)) folds into the GST N-terminal domain. Glycyl lysine isopeptide (Lys-Gly) (interchain with G-Cter in ubiquitin) cross-links involve residues Lys50, Lys172, Lys173, Lys188, and Lys190. Positions 153–309 (PAYATTRIRS…LISAVLPTAF (157 aa)) constitute a GST C-terminal domain. Lys203 carries the N6-acetyllysine; alternate modification. A Glycyl lysine isopeptide (Lys-Gly) (interchain with G-Cter in ubiquitin); alternate cross-link involves residue Lys203. Residues Lys206, Lys207, and Lys214 each participate in a glycyl lysine isopeptide (Lys-Gly) (interchain with G-Cter in ubiquitin) cross-link. 2 consecutive transmembrane segments (helical) span residues 292 to 312 (VLGHVNNILISAVLPTAFRVA) and 320 to 340 (LGTTLVVGLLAGMGYFAFMLF). A required for mitochondrial localization region spans residues 320-358 (LGTTLVVGLLAGMGYFAFMLFRKRLGSMILALRPRPNYF).

The protein belongs to the GST superfamily. In terms of assembly, homodimer. In terms of processing, ubiquitinated by PRKN during mitophagy, leading to its degradation and enhancement of mitophagy. Deubiquitinated by USP30.

It is found in the mitochondrion outer membrane. Its subcellular location is the cytoplasm. Its function is as follows. Regulates the mitochondrial network by promoting mitochondrial fission. The polypeptide is Ganglioside-induced differentiation-associated protein 1 (GDAP1) (Bos taurus (Bovine)).